Here is a 500-residue protein sequence, read N- to C-terminus: Glutamate--tRNA ligase (500 aa).

The 'HIGH' region motif lies at proline 12 to asparagine 22. Residues lysine 259–arginine 263 carry the 'KMSKS' region motif. Lysine 262 lines the ATP pocket.

The protein belongs to the class-I aminoacyl-tRNA synthetase family. Glutamate--tRNA ligase type 1 subfamily. As to quaternary structure, monomer.

It is found in the cytoplasm. It catalyses the reaction tRNA(Glu) + L-glutamate + ATP = L-glutamyl-tRNA(Glu) + AMP + diphosphate. Catalyzes the attachment of glutamate to tRNA(Glu) in a two-step reaction: glutamate is first activated by ATP to form Glu-AMP and then transferred to the acceptor end of tRNA(Glu). In Lactobacillus delbrueckii subsp. bulgaricus (strain ATCC 11842 / DSM 20081 / BCRC 10696 / JCM 1002 / NBRC 13953 / NCIMB 11778 / NCTC 12712 / WDCM 00102 / Lb 14), this protein is Glutamate--tRNA ligase.